Here is a 127-residue protein sequence, read N- to C-terminus: Small ribosomal subunit protein uS11 (127 aa).

It belongs to the universal ribosomal protein uS11 family. Part of the 30S ribosomal subunit. Interacts with proteins S7 and S18. Binds to IF-3.

Functionally, located on the platform of the 30S subunit, it bridges several disparate RNA helices of the 16S rRNA. Forms part of the Shine-Dalgarno cleft in the 70S ribosome. This is Small ribosomal subunit protein uS11 from Flavobacterium psychrophilum (strain ATCC 49511 / DSM 21280 / CIP 103535 / JIP02/86).